The following is a 493-amino-acid chain: Cobyric acid synthase (493 aa).

The GATase cobBQ-type domain occupies 246-440 (PIDIAVIKMP…IHGVFDGVSF (195 aa)). Catalysis depends on Cys326, which acts as the Nucleophile. The active site involves His432.

Belongs to the CobB/CobQ family. CobQ subfamily.

Its pathway is cofactor biosynthesis; adenosylcobalamin biosynthesis. In terms of biological role, catalyzes amidations at positions B, D, E, and G on adenosylcobyrinic A,C-diamide. NH(2) groups are provided by glutamine, and one molecule of ATP is hydrogenolyzed for each amidation. The sequence is that of Cobyric acid synthase from Clostridium botulinum (strain Langeland / NCTC 10281 / Type F).